The chain runs to 353 residues: Phosphate acyltransferase (353 aa).

Belongs to the PlsX family. As to quaternary structure, homodimer. Probably interacts with PlsY.

Its subcellular location is the cytoplasm. It carries out the reaction a fatty acyl-[ACP] + phosphate = an acyl phosphate + holo-[ACP]. It functions in the pathway lipid metabolism; phospholipid metabolism. Functionally, catalyzes the reversible formation of acyl-phosphate (acyl-PO(4)) from acyl-[acyl-carrier-protein] (acyl-ACP). This enzyme utilizes acyl-ACP as fatty acyl donor, but not acyl-CoA. In Bradyrhizobium diazoefficiens (strain JCM 10833 / BCRC 13528 / IAM 13628 / NBRC 14792 / USDA 110), this protein is Phosphate acyltransferase.